Reading from the N-terminus, the 494-residue chain is Trigger factor (494 aa).

Residues 169-254 (GDRITMDYVG…VKDVAAPGAV (86 aa)) enclose the PPIase FKBP-type domain. Residues 440–494 (LLAEDEGEAKAETKKAAPKKKAAAKSEAAEAGEGEEAAPKKKAAPKKKASEDSAE) are disordered.

This sequence belongs to the FKBP-type PPIase family. Tig subfamily.

The protein localises to the cytoplasm. It carries out the reaction [protein]-peptidylproline (omega=180) = [protein]-peptidylproline (omega=0). Functionally, involved in protein export. Acts as a chaperone by maintaining the newly synthesized protein in an open conformation. Functions as a peptidyl-prolyl cis-trans isomerase. This Rhizobium etli (strain ATCC 51251 / DSM 11541 / JCM 21823 / NBRC 15573 / CFN 42) protein is Trigger factor.